The primary structure comprises 44 residues: Protein PsbN (44 aa).

The helical transmembrane segment at 6–26 (FFFTFFLWFLLLSVTGYSVYV) threads the bilayer.

It belongs to the PsbN family.

Its subcellular location is the plastid. It is found in the chloroplast thylakoid membrane. May play a role in photosystem I and II biogenesis. The protein is Protein PsbN of Chlamydomonas reinhardtii (Chlamydomonas smithii).